We begin with the raw amino-acid sequence, 591 residues long: DDB1- and CUL4-associated factor 8 (591 aa).

The segment covering 1 to 14 (MSSKRPSTDGRRDL) has biased composition (basic and acidic residues). The disordered stretch occupies residues 1 to 140 (MSSKRPSTDG…EDWVSSETTA (140 aa)). Residues S21 and S22 each carry the phosphoserine modification. The Nuclear export signal motif lies at 39–50 (IEVEASDLSLSL). Basic and acidic residues-rich tracts occupy residues 65 to 99 (RGTD…HGHS) and 118 to 131 (SRDQ…RALE). 3 positions are modified to phosphoserine: S99, S123, and S124. WD repeat units lie at residues 185-224 (GHTG…PVLD), 228-269 (GHKS…CCKN), 275-315 (QHKG…PASK), 323-363 (EKKV…ENEN), 379-418 (ESKA…GAQY), 426-466 (RNNA…IIQF), and 470-509 (DKGG…STEL). R198 is modified (omega-N-methylarginine; by PRMT1). Residues 552–591 (HRRWREPGVGATDADSDESPSSSDTSDEEEGPDRVQCMPS) form a disordered region.

This sequence belongs to the WD repeat DCAF8 family. Interacts with DDB1, CUL4A and CUL4B. Interacts with KPNA1, KPNB1 and XPO1.

It is found in the nucleus. It localises to the cytoplasm. Its pathway is protein modification; protein ubiquitination. May function as a substrate receptor for CUL4-DDB1 E3 ubiquitin-protein ligase complex. The polypeptide is DDB1- and CUL4-associated factor 8 (Dcaf8) (Rattus norvegicus (Rat)).